Here is a 760-residue protein sequence, read N- to C-terminus: Exostosin-1 (760 aa).

The Cytoplasmic portion of the chain corresponds to 1–6; that stretch reads MQAKKR. The helical; Signal-anchor for type II membrane protein transmembrane segment at 7–25 threads the bilayer; it reads YILVFVSCAFLAYAYFGGY. Over 26–760 the chain is Lumenal; sequence RLKVSPLRPR…KYRQIELVGS (735 aa). N-linked (GlcNAc...) asparagine glycosylation is found at asparagine 71 and asparagine 327. Arginine 437 contacts UDP-N-acetyl-alpha-D-glucosamine. Residue asparagine 476 is glycosylated (N-linked (GlcNAc...) asparagine). The tract at residues 540–560 is disordered; it reads LGGSTRSQGAGPTSQTTEGRP. The segment covering 541–560 has biased composition (polar residues); that stretch reads GGSTRSQGAGPTSQTTEGRP. UDP-N-acetyl-alpha-D-glucosamine is bound by residues arginine 565, aspartate 581, glutamate 582, aspartate 583, glutamate 669, aspartate 670, and arginine 713. Aspartate 583 lines the Mn(2+) pocket. Cysteine 668 and cysteine 716 form a disulfide bridge. Aspartate 670 is an active-site residue.

This sequence belongs to the glycosyltransferase 47 family. Interacts with sau. Requires Mn(2+) as cofactor. Ubiquitously expressed in early embryos. Later (in stage 10 embryos), it is expressed at higher level in the nervous system. Ubiquitously expressed in wing imaginal disk.

Its subcellular location is the endoplasmic reticulum membrane. The protein resides in the golgi apparatus membrane. It catalyses the reaction 3-O-{[(1-&gt;4)-beta-D-GlcA-(1-&gt;4)-alpha-D-GlcNAc](n)-(1-&gt;4)-beta-D-GlcA-(1-&gt;3)-beta-D-Gal-(1-&gt;3)-beta-D-Gal-(1-&gt;4)-beta-D-Xyl}-L-seryl-[protein] + UDP-N-acetyl-alpha-D-glucosamine = 3-O-{alpha-D-GlcNAc-[(1-&gt;4)-beta-D-GlcA-(1-&gt;4)-alpha-D-GlcNAc](n)-(1-&gt;4)-beta-D-GlcA-(1-&gt;3)-beta-D-Gal-(1-&gt;3)-beta-D-Gal-(1-&gt;4)-beta-D-Xyl}-L-seryl-[protein] + UDP + H(+). The catalysed reaction is 3-O-{alpha-D-GlcNAc-[(1-&gt;4)-beta-D-GlcA-(1-&gt;4)-alpha-D-GlcNAc](n)-(1-&gt;4)-beta-D-GlcA-(1-&gt;3)-beta-D-Gal-(1-&gt;3)-beta-D-Gal-(1-&gt;4)-beta-D-Xyl}-L-seryl-[protein] + UDP-alpha-D-glucuronate = 3-O-{[(1-&gt;4)-beta-D-GlcA-(1-&gt;4)-alpha-D-GlcNAc](n+1)-(1-&gt;4)-beta-D-GlcA-(1-&gt;3)-beta-D-Gal-(1-&gt;3)-beta-D-Gal-(1-&gt;4)-beta-D-Xyl}-L-seryl-[protein] + UDP + H(+). Its pathway is protein modification; protein glycosylation. It functions in the pathway glycan metabolism; heparan sulfate biosynthesis. It participates in glycan metabolism; heparin biosynthesis. Glycosyltransferase required for the biosynthesis of heparan-sulfate and responsible for the alternating addition of beta-1-4-linked glucuronic acid (GlcA) and alpha-1-4-linked N-acetylglucosamine (GlcNAc) units to nascent heparan sulfate chains. Botv is the trigger of heparan sulfate chain initiation and polymerization takes place by a complex of ttv and sotv. Plays a central role in the diffusion of morphogens hedgehog (hh), wingless (wg) and decapentaplegic (dpp) via its role in heparan sulfate proteoglycans (HSPGs) biosynthesis which are required for movement of hh, dpp and wg morphogens. The sequence is that of Exostosin-1 (ttv) from Drosophila melanogaster (Fruit fly).